A 100-amino-acid chain; its full sequence is Urease subunit gamma (100 aa).

This sequence belongs to the urease gamma subunit family. In terms of assembly, heterotrimer of UreA (gamma), UreB (beta) and UreC (alpha) subunits. Three heterotrimers associate to form the active enzyme.

It is found in the cytoplasm. It carries out the reaction urea + 2 H2O + H(+) = hydrogencarbonate + 2 NH4(+). Its pathway is nitrogen metabolism; urea degradation; CO(2) and NH(3) from urea (urease route): step 1/1. The chain is Urease subunit gamma from Haemophilus influenzae (strain PittGG).